We begin with the raw amino-acid sequence, 277 residues long: NADPH-dependent 7-cyano-7-deazaguanine reductase (277 aa).

Residue 83-85 (VES) coordinates substrate. An NADPH-binding site is contributed by 85–86 (SK). The active-site Thioimide intermediate is the cysteine 184. Aspartate 191 serves as the catalytic Proton donor. 223–224 (HE) lines the substrate pocket. Residue 252 to 253 (RG) coordinates NADPH.

The protein belongs to the GTP cyclohydrolase I family. QueF type 2 subfamily. Homodimer.

It localises to the cytoplasm. The catalysed reaction is 7-aminomethyl-7-carbaguanine + 2 NADP(+) = 7-cyano-7-deazaguanine + 2 NADPH + 3 H(+). It functions in the pathway tRNA modification; tRNA-queuosine biosynthesis. Its function is as follows. Catalyzes the NADPH-dependent reduction of 7-cyano-7-deazaguanine (preQ0) to 7-aminomethyl-7-deazaguanine (preQ1). This chain is NADPH-dependent 7-cyano-7-deazaguanine reductase, found in Cupriavidus metallidurans (strain ATCC 43123 / DSM 2839 / NBRC 102507 / CH34) (Ralstonia metallidurans).